The sequence spans 804 residues: Elongation factor G, mitochondrial (804 aa).

The N-terminal 9 residues, 1 to 9 (MVRPAQVRA), are a transit peptide targeting the mitochondrion. Positions 103–389 (SKVRNIGIAA…GVCDYLPNPS (287 aa)) constitute a tr-type G domain. GTP is bound by residues 112–119 (AHIDSGKT), 187–191 (DTPGH), and 241–244 (NKMD).

It belongs to the TRAFAC class translation factor GTPase superfamily. Classic translation factor GTPase family. EF-G/EF-2 subfamily.

The protein localises to the mitochondrion. Its pathway is protein biosynthesis; polypeptide chain elongation. Mitochondrial GTPase that catalyzes the GTP-dependent ribosomal translocation step during translation elongation. During this step, the ribosome changes from the pre-translocational (PRE) to the post-translocational (POST) state as the newly formed A-site-bound peptidyl-tRNA and P-site-bound deacylated tRNA move to the P and E sites, respectively. Catalyzes the coordinated movement of the two tRNA molecules, the mRNA and conformational changes in the ribosome. This is Elongation factor G, mitochondrial (mef1) from Talaromyces stipitatus (strain ATCC 10500 / CBS 375.48 / QM 6759 / NRRL 1006) (Penicillium stipitatum).